We begin with the raw amino-acid sequence, 540 residues long: Peptide chain release factor 3 (540 aa).

The tr-type G domain maps to 14–283; that stretch reads NQRRNFAIIS…AFLDYALKPI (270 aa). GTP is bound by residues 23-30, 91-95, and 145-148; these read SHPDAGKT, DTPGH, and NKLD.

This sequence belongs to the TRAFAC class translation factor GTPase superfamily. Classic translation factor GTPase family. PrfC subfamily.

It localises to the cytoplasm. Increases the formation of ribosomal termination complexes and stimulates activities of RF-1 and RF-2. It binds guanine nucleotides and has strong preference for UGA stop codons. It may interact directly with the ribosome. The stimulation of RF-1 and RF-2 is significantly reduced by GTP and GDP, but not by GMP. The chain is Peptide chain release factor 3 from Gloeothece citriformis (strain PCC 7424) (Cyanothece sp. (strain PCC 7424)).